The chain runs to 94 residues: Evasin P1172 (94 aa).

Disulfide bonds link Cys35-Cys54, Cys39-Cys56, and Cys50-Cys67. Asn38, Asn44, Asn53, and Asn80 each carry an N-linked (GlcNAc...) asparagine glycan.

The protein resides in the secreted. Its function is as follows. Salivary chemokine-binding protein which binds to host chemokines CXCL1, CXCL2, CXCL5 and CXCL8. The sequence is that of Evasin P1172 from Ixodes ricinus (Common tick).